The chain runs to 389 residues: MDIINMLDEKFKNIFKRHYENVFFSPGRVNLIGEHTDYNGGHVFPCALTIGTYGLVARRNDNKVLAYSLNFDNLGVIEFSLDDLKKCKKDDWANYVKGVIDTFNKHGHNIENGFEILFYGSIPNGSGLSSSASIEVLTGIILNDLFKLNINMVEIVKMCQEAENSFIGVNCGIMDQFSIGMGKKDCAILLDCSTLEYSYSKLNMTGYKIVIANTNKKRGLADSKYNERRSECEAALKELQKVKNINSLGELTEAEFEELKDIISDPVKLRRARHAVYENQRTLKAVVSLNNNDLKTFGKLMNESHISLRDDYEVTGIELDTLVSLALESKGVIGSRMTGAGFGGCTVSIVKEDYVDEFIESIKAKYTEKIGYEPSFYIVNIADGAKKIN.

Position 34–37 (34–37) interacts with substrate; the sequence is EHTD. Residues Ser68 and 125-131 each bind ATP; that span reads GSGLSSS. 2 residues coordinate Mg(2+): Ser131 and Glu163. Asp175 (proton acceptor) is an active-site residue. Substrate is bound at residue Tyr225.

It belongs to the GHMP kinase family. GalK subfamily.

Its subcellular location is the cytoplasm. It carries out the reaction alpha-D-galactose + ATP = alpha-D-galactose 1-phosphate + ADP + H(+). The protein operates within carbohydrate metabolism; galactose metabolism. Catalyzes the transfer of the gamma-phosphate of ATP to D-galactose to form alpha-D-galactose-1-phosphate (Gal-1-P). The polypeptide is Galactokinase (Clostridium acetobutylicum (strain ATCC 824 / DSM 792 / JCM 1419 / IAM 19013 / LMG 5710 / NBRC 13948 / NRRL B-527 / VKM B-1787 / 2291 / W)).